Consider the following 506-residue polypeptide: Cysteine--tRNA ligase (506 aa).

C43 is a Zn(2+) binding site. Residues 45–55 carry the 'HIGH' region motif; sequence VTVYDLCHLGH. Positions 237, 262, and 266 each coordinate Zn(2+). Positions 294–298 match the 'KMSKS' region motif; it reads KMSKS. Residue K297 coordinates ATP.

Belongs to the class-I aminoacyl-tRNA synthetase family. Monomer. It depends on Zn(2+) as a cofactor.

The protein localises to the cytoplasm. It carries out the reaction tRNA(Cys) + L-cysteine + ATP = L-cysteinyl-tRNA(Cys) + AMP + diphosphate. The polypeptide is Cysteine--tRNA ligase (Synechococcus sp. (strain JA-3-3Ab) (Cyanobacteria bacterium Yellowstone A-Prime)).